A 790-amino-acid chain; its full sequence is Protein SEY1 (790 aa).

Residues 1-692 (MELSEGELSH…KRSIVQHITQ (692 aa)) are Cytoplasmic-facing. A GB1/RHD3-type G domain is found at 55-284 (GNNYHIISVF…VSNELFKPEY (230 aa)). Position 65 to 72 (65 to 72 (GSQSTGKS)) interacts with GTP. A helical membrane pass occupies residues 693-713 (IPYYIYLIILVLGWNEFMAII). Over 714-716 (RNP) the chain is Lumenal. The chain crosses the membrane as a helical span at residues 717–737 (LFFSLSIVLGATVYVLYYLGL). The Cytoplasmic segment spans residues 738-790 (LRPALVVAQRTMDEVIVMAKTKLREVLIDDHEVTGRQLNKMAGSKENIELDDM).

Belongs to the TRAFAC class dynamin-like GTPase superfamily. GB1/RHD3 GTPase family. RHD3 subfamily.

The protein resides in the endoplasmic reticulum membrane. Its function is as follows. Cooperates with the reticulon proteins and tubule-shaping DP1 family proteins to generate and maintain the structure of the tubular endoplasmic reticulum network. Has GTPase activity, which is required for its function in ER organization. This chain is Protein SEY1, found in Candida albicans (strain WO-1) (Yeast).